Consider the following 122-residue polypeptide: MARIAGVNIPTNKRVLIALQYIHGIGPKIAGEIIEKVKIAEDRRVNQLSDQEVLQIREIIDRDYVVEGDLRRETGINIKRLMDLGCYRGLRHRRGLPVRGQRTHTNARTRKGPAKAIAGKKK.

Positions 99-122 are disordered; sequence RGQRTHTNARTRKGPAKAIAGKKK.

This sequence belongs to the universal ribosomal protein uS13 family. As to quaternary structure, part of the 30S ribosomal subunit. Forms a loose heterodimer with protein S19. Forms two bridges to the 50S subunit in the 70S ribosome.

Functionally, located at the top of the head of the 30S subunit, it contacts several helices of the 16S rRNA. In the 70S ribosome it contacts the 23S rRNA (bridge B1a) and protein L5 of the 50S subunit (bridge B1b), connecting the 2 subunits; these bridges are implicated in subunit movement. Contacts the tRNAs in the A and P-sites. In Bradyrhizobium sp. (strain ORS 278), this protein is Small ribosomal subunit protein uS13.